We begin with the raw amino-acid sequence, 87 residues long: Large ribosomal subunit protein bL27 (87 aa).

Residues 1–21 are disordered; the sequence is MAHKKGQGSTQNNRDSAGRRL.

It belongs to the bacterial ribosomal protein bL27 family.

This Nautilia profundicola (strain ATCC BAA-1463 / DSM 18972 / AmH) protein is Large ribosomal subunit protein bL27.